The following is a 175-amino-acid chain: Transcriptional repressor NrdR (175 aa).

A zinc finger spans residues 3–32 (CPYCSHPDTKVIDSRDVDDGVRRRRECVVC). Residues 47–137 (LFVVKKDQRR…VYREFTDITQ (91 aa)) form the ATP-cone domain.

Belongs to the NrdR family. The cofactor is Zn(2+).

Functionally, negatively regulates transcription of bacterial ribonucleotide reductase nrd genes and operons by binding to NrdR-boxes. The sequence is that of Transcriptional repressor NrdR from Dehalococcoides mccartyi (strain ATCC BAA-2266 / KCTC 15142 / 195) (Dehalococcoides ethenogenes (strain 195)).